The sequence spans 368 residues: Probable dual-specificity RNA methyltransferase RlmN (368 aa).

E100 serves as the catalytic Proton acceptor. The region spanning Q106–D344 is the Radical SAM core domain. C113 and C349 form a disulfide bridge. Residues C120, C124, and C127 each coordinate [4Fe-4S] cluster. Residues G172–E173, S204, S227–H229, and N305 each bind S-adenosyl-L-methionine. Catalysis depends on C349, which acts as the S-methylcysteine intermediate.

Belongs to the radical SAM superfamily. RlmN family. [4Fe-4S] cluster serves as cofactor.

Its subcellular location is the cytoplasm. It carries out the reaction adenosine(2503) in 23S rRNA + 2 reduced [2Fe-2S]-[ferredoxin] + 2 S-adenosyl-L-methionine = 2-methyladenosine(2503) in 23S rRNA + 5'-deoxyadenosine + L-methionine + 2 oxidized [2Fe-2S]-[ferredoxin] + S-adenosyl-L-homocysteine. It catalyses the reaction adenosine(37) in tRNA + 2 reduced [2Fe-2S]-[ferredoxin] + 2 S-adenosyl-L-methionine = 2-methyladenosine(37) in tRNA + 5'-deoxyadenosine + L-methionine + 2 oxidized [2Fe-2S]-[ferredoxin] + S-adenosyl-L-homocysteine. Functionally, specifically methylates position 2 of adenine 2503 in 23S rRNA and position 2 of adenine 37 in tRNAs. This Streptococcus agalactiae serotype V (strain ATCC BAA-611 / 2603 V/R) protein is Probable dual-specificity RNA methyltransferase RlmN.